A 255-amino-acid polypeptide reads, in one-letter code: Diphthine synthase (255 aa).

S-adenosyl-L-methionine-binding positions include Leu9, Asp85, Val88, 113 to 114, Leu164, Ala207, and His232; that span reads SI.

It belongs to the diphthine synthase family. Homodimer.

It catalyses the reaction 2-[(3S)-amino-3-carboxypropyl]-L-histidyl-[translation elongation factor 2] + 3 S-adenosyl-L-methionine = diphthine-[translation elongation factor 2] + 3 S-adenosyl-L-homocysteine + 3 H(+). It participates in protein modification; peptidyl-diphthamide biosynthesis. Functionally, S-adenosyl-L-methionine-dependent methyltransferase that catalyzes the trimethylation of the amino group of the modified target histidine residue in translation elongation factor 2 (EF-2), to form an intermediate called diphthine. The three successive methylation reactions represent the second step of diphthamide biosynthesis. This chain is Diphthine synthase, found in Methanococcus maripaludis (strain C5 / ATCC BAA-1333).